The following is a 485-amino-acid chain: MELYKLKAHELKDMISKKEVKVEEVTNSFLNRIEEVDEKVNALLYVAKEEAVNTAKELDKKIESGESLSGLSGVPVAIKDNISVKNMQNTCASKILEGYVSPYDATVIENLKKNNGVIIGKANMDEFAMGSSTENSAFKVSKNPWSLERVPGGSSGGSAVAVASLEAPISLGTETGGSVRQPASFCGLVGLKPTYGRISRYGVVAFGSTLDQVGMFARDVEDCALLTQNIAGLDKMDFTTVDTPVQDYSKSLNKDLKGRKIGIPKEFFEEGLDEGVREAVKEAIKVFEENGAEVKECSLPLSDYALAAYYIISSAEASSNLARFDGVRYGYRDAEAENALDLYVKSRSKGFGEEAKRRIMLGTYVLSKGYYDAYYKKALKVRSLIKNDFQRAFKEFDAIITPTTPTPAFRIGEKTKDVLSMYMSDIYTVPVNIAGIPSISVPCGFVSGLPVGLQIMGNYFKEDTLFNLAYSYEQSTKWHDKIANL.

Residues Lys79 and Ser154 each act as charge relay system in the active site. The active-site Acyl-ester intermediate is the Ser178.

This sequence belongs to the amidase family. GatA subfamily. Heterotrimer of A, B and C subunits.

The catalysed reaction is L-glutamyl-tRNA(Gln) + L-glutamine + ATP + H2O = L-glutaminyl-tRNA(Gln) + L-glutamate + ADP + phosphate + H(+). Its function is as follows. Allows the formation of correctly charged Gln-tRNA(Gln) through the transamidation of misacylated Glu-tRNA(Gln) in organisms which lack glutaminyl-tRNA synthetase. The reaction takes place in the presence of glutamine and ATP through an activated gamma-phospho-Glu-tRNA(Gln). This Clostridium acetobutylicum (strain ATCC 824 / DSM 792 / JCM 1419 / IAM 19013 / LMG 5710 / NBRC 13948 / NRRL B-527 / VKM B-1787 / 2291 / W) protein is Glutamyl-tRNA(Gln) amidotransferase subunit A 1 (gatA1).